Here is a 216-residue protein sequence, read N- to C-terminus: MSLPMLQVALDNQTMDSAYETTRLIAEEVDIIEVGTILCVGEGVRAVRDLKALYPHKIVLADAKIADAGKILSRMCFEANADWVTVICCADINTAKGALDVAKEFNGDVQIELTGYWTWEQAQQWRDAGIQQVVYHRSRDAQAAGVAWGEADITAIKRLSDMGFKVTVTGGLVLEDLPLFKGIPIHVFIAGRSIRDAASPVEAARQFKRSIAELWG.

Asp-11 contributes to the substrate binding site. 2 residues coordinate Mg(2+): Glu-33 and Asp-62. Arg-192 is a binding site for substrate.

Belongs to the HPS/KGPDC family. KGPDC subfamily. In terms of assembly, homodimer. The cofactor is Mg(2+).

It carries out the reaction 3-dehydro-L-gulonate 6-phosphate + H(+) = L-xylulose 5-phosphate + CO2. Its pathway is cofactor degradation; L-ascorbate degradation; D-xylulose 5-phosphate from L-ascorbate: step 2/4. Functionally, catalyzes the decarboxylation of 3-keto-L-gulonate-6-P into L-xylulose-5-P. Is involved in the anaerobic L-ascorbate utilization. The protein is 3-keto-L-gulonate-6-phosphate decarboxylase UlaD of Shigella boydii serotype 18 (strain CDC 3083-94 / BS512).